The primary structure comprises 250 residues: Methylthioribulose-1-phosphate dehydratase (250 aa).

Cys103 contacts substrate. The Zn(2+) site is built by His121 and His123. Catalysis depends on Glu146, which acts as the Proton donor/acceptor. A Zn(2+)-binding site is contributed by His211.

The protein belongs to the aldolase class II family. MtnB subfamily. It depends on Zn(2+) as a cofactor.

The protein resides in the cytoplasm. It carries out the reaction 5-(methylsulfanyl)-D-ribulose 1-phosphate = 5-methylsulfanyl-2,3-dioxopentyl phosphate + H2O. Its pathway is amino-acid biosynthesis; L-methionine biosynthesis via salvage pathway; L-methionine from S-methyl-5-thio-alpha-D-ribose 1-phosphate: step 2/6. Catalyzes the dehydration of methylthioribulose-1-phosphate (MTRu-1-P) into 2,3-diketo-5-methylthiopentyl-1-phosphate (DK-MTP-1-P). This is Methylthioribulose-1-phosphate dehydratase from Clavispora lusitaniae (strain ATCC 42720) (Yeast).